We begin with the raw amino-acid sequence, 352 residues long: Glycerol-1-phosphate dehydrogenase [NAD(P)+] (352 aa).

Residues 98-102 (GKAID) and 120-123 (TAAS) each bind NAD(+). Residue Asp-125 participates in substrate binding. Ser-129 is an NAD(+) binding site. Residue Asp-172 coordinates substrate. Zn(2+)-binding residues include Asp-172 and His-252. His-256 contacts substrate. His-268 serves as a coordination point for Zn(2+).

It belongs to the glycerol-1-phosphate dehydrogenase family. Requires Zn(2+) as cofactor.

It is found in the cytoplasm. The catalysed reaction is sn-glycerol 1-phosphate + NAD(+) = dihydroxyacetone phosphate + NADH + H(+). It catalyses the reaction sn-glycerol 1-phosphate + NADP(+) = dihydroxyacetone phosphate + NADPH + H(+). It participates in membrane lipid metabolism; glycerophospholipid metabolism. Functionally, catalyzes the NAD(P)H-dependent reduction of dihydroxyacetonephosphate (DHAP or glycerone phosphate) to glycerol 1-phosphate (G1P). The G1P thus generated is used as the glycerophosphate backbone of phospholipids in the cellular membranes of Archaea. This chain is Glycerol-1-phosphate dehydrogenase [NAD(P)+], found in Halobacterium salinarum (strain ATCC 29341 / DSM 671 / R1).